Consider the following 136-residue polypeptide: Large ribosomal subunit protein bL21 (136 aa).

It belongs to the bacterial ribosomal protein bL21 family. In terms of assembly, part of the 50S ribosomal subunit. Contacts protein L20.

In terms of biological role, this protein binds to 23S rRNA in the presence of protein L20. The polypeptide is Large ribosomal subunit protein bL21 (Gloeothece citriformis (strain PCC 7424) (Cyanothece sp. (strain PCC 7424))).